The chain runs to 313 residues: Cytochrome c biogenesis protein CcsA (313 aa).

8 helical membrane passes run 13-35 (ISFSIISIVITTHLMTFAREIAG), 43-63 (GMIAVFLRITGLLVTRWIYSG), 67-87 (LSNLYESLIFLSWGFSLIHMI), 96-116 (FLSSITAPSAILTQGFVTSGL), 142-162 (MLLSYAALLCGSLLSIALLVI), 219-239 (VIGIGFTLLTLGILSGAVWAN), 252-269 (ETWAFITWTISAIYLHTR), and 280-300 (AIVASIGFLIIWICYFGVNLL).

The protein belongs to the CcmF/CycK/Ccl1/NrfE/CcsA family. In terms of assembly, may interact with Ccs1.

The protein localises to the plastid. It localises to the chloroplast thylakoid membrane. Its function is as follows. Required during biogenesis of c-type cytochromes (cytochrome c6 and cytochrome f) at the step of heme attachment. This is Cytochrome c biogenesis protein CcsA from Amborella trichopoda.